Reading from the N-terminus, the 330-residue chain is GRB2-related adapter protein 2 (330 aa).

Residues 1-56 form the SH3 1 domain; it reads MEAVAKFDFTASGEDELSFHTGDVLKILSNQEEWFKAELGSQEGYVPKNFIDIQFP. Tyrosine 45 is modified (phosphotyrosine). The SH2 domain occupies 58–149; that stretch reads WFHEGLSRHQ…QKQIFLRDRT (92 aa). An N6-acetyllysine modification is found at lysine 106. Positions 143–244 are disordered; it reads IFLRDRTRED…GSLDINDGHC (102 aa). A compositionally biased stretch (basic and acidic residues) spans 144–164; that stretch reads FLRDRTREDQGHRGNSLDRRS. Position 187 is a phosphoserine (serine 187). Over residues 209–222 the composition is skewed to low complexity; sequence PAPQQLQQPPQQRY. At serine 236 the chain carries Phosphoserine. The residue at position 262 (threonine 262) is a Phosphothreonine. Residues 271–330 form the SH3 2 domain; the sequence is GRVRWARALYDFEALEDDELGFHSGEVVEVLDSSNPSWWTGRLHNKLGLFPANYVAPMTR.

It belongs to the GRB2/sem-5/DRK family. As to quaternary structure, interacts with phosphorylated LIME1 upon TCR activation. Interacts with phosphorylated LAT and LAX1 upon TCR activation. Interacts with SHB. Interacts with PTPN23.

The protein localises to the nucleus. Its subcellular location is the cytoplasm. It is found in the endosome. Its function is as follows. Interacts with SLP-76 to regulate NF-AT activation. Binds to tyrosine-phosphorylated shc. In Homo sapiens (Human), this protein is GRB2-related adapter protein 2 (GRAP2).